We begin with the raw amino-acid sequence, 782 residues long: Translation initiation factor IF-2 (782 aa).

Positions 47–196 are disordered; the sequence is DNAIDGTNKK…TPPKPKELPE (150 aa). Basic and acidic residues predominate over residues 53 to 65; the sequence is TNKKAEAPKKETT. Over residues 66–81 the composition is skewed to polar residues; it reads SNENGNSKGPNKPNMT. Residues 82–93 show a composition bias toward low complexity; the sequence is NSNEKSNKPNKP. A compositionally biased stretch (polar residues) spans 115-129; that stretch reads KPANTSNQTQSSGNK. The span at 133-170 shows a compositional bias: low complexity; sequence GGQKRNNNNNSNRPGGGNPNRPGGNNRPNRGGNFNNKG. Residues 283 to 452 form the tr-type G domain; the sequence is ERPPVVTIMG…LLVSEVEELK (170 aa). Residues 292 to 299 are G1; it reads GHVDHGKT. GTP is bound at residue 292 to 299; that stretch reads GHVDHGKT. Positions 317–321 are G2; the sequence is GITQH. A G3 region spans residues 338–341; the sequence is DTPG. Residues 338–342 and 392–395 contribute to the GTP site; these read DTPGH and NKID. The G4 stretch occupies residues 392–395; that stretch reads NKID. A G5 region spans residues 428–430; that stretch reads SAK.

Belongs to the TRAFAC class translation factor GTPase superfamily. Classic translation factor GTPase family. IF-2 subfamily.

Its subcellular location is the cytoplasm. In terms of biological role, one of the essential components for the initiation of protein synthesis. Protects formylmethionyl-tRNA from spontaneous hydrolysis and promotes its binding to the 30S ribosomal subunits. Also involved in the hydrolysis of GTP during the formation of the 70S ribosomal complex. This is Translation initiation factor IF-2 from Listeria innocua serovar 6a (strain ATCC BAA-680 / CLIP 11262).